A 43-amino-acid chain; its full sequence is Protein PsbN (43 aa).

A helical membrane pass occupies residues 5–27 (TLVTISISCLLVSFTGYAIYTSF).

This sequence belongs to the PsbN family.

It is found in the plastid. It localises to the chloroplast thylakoid membrane. Functionally, may play a role in photosystem I and II biogenesis. This Welwitschia mirabilis (Tree tumbo) protein is Protein PsbN.